Consider the following 318-residue polypeptide: Acetyl-coenzyme A carboxylase carboxyl transferase subunit alpha (318 aa).

Residues 39 to 297 (RLEKRSQTAL…SEALKAMVGK (259 aa)) enclose the CoA carboxyltransferase C-terminal domain.

The protein belongs to the AccA family. Acetyl-CoA carboxylase is a heterohexamer composed of biotin carboxyl carrier protein (AccB), biotin carboxylase (AccC) and two subunits each of ACCase subunit alpha (AccA) and ACCase subunit beta (AccD).

The protein localises to the cytoplasm. It catalyses the reaction N(6)-carboxybiotinyl-L-lysyl-[protein] + acetyl-CoA = N(6)-biotinyl-L-lysyl-[protein] + malonyl-CoA. It participates in lipid metabolism; malonyl-CoA biosynthesis; malonyl-CoA from acetyl-CoA: step 1/1. In terms of biological role, component of the acetyl coenzyme A carboxylase (ACC) complex. First, biotin carboxylase catalyzes the carboxylation of biotin on its carrier protein (BCCP) and then the CO(2) group is transferred by the carboxyltransferase to acetyl-CoA to form malonyl-CoA. This is Acetyl-coenzyme A carboxylase carboxyl transferase subunit alpha from Bartonella tribocorum (strain CIP 105476 / IBS 506).